The chain runs to 86 residues: Large ribosomal subunit protein bL27 (86 aa).

Positions 1–26 (MATKKAGGSSRNGRDSAGRRLGVKQS) are disordered.

It belongs to the bacterial ribosomal protein bL27 family.

The sequence is that of Large ribosomal subunit protein bL27 from Rickettsia canadensis (strain McKiel).